The sequence spans 315 residues: Glutathione synthetase (315 aa).

An ATP-grasp domain is found at 125 to 310 (KLFTAWFSDL…ITGMLMDAIE (186 aa)). The N-beta-linked (GlcNAc) arginine glycan is linked to Arg-256. 2 residues coordinate Mg(2+): Glu-281 and Asn-283.

It belongs to the prokaryotic GSH synthase family. It depends on Mg(2+) as a cofactor. The cofactor is Mn(2+). Post-translationally, glycosylation at Arg-256 by NleB enhances the glutathione synthetase activity, leading to an increase in glutathione production. Glycosylation may promote C.rodentium survival in oxidative stress conditions.

It catalyses the reaction gamma-L-glutamyl-L-cysteine + glycine + ATP = glutathione + ADP + phosphate + H(+). Its pathway is sulfur metabolism; glutathione biosynthesis; glutathione from L-cysteine and L-glutamate: step 2/2. The protein is Glutathione synthetase of Citrobacter rodentium.